Consider the following 312-residue polypeptide: Malate dehydrogenase (312 aa).

NAD(+) is bound by residues 7–12 (GAGNVG) and aspartate 32. The substrate site is built by arginine 82 and arginine 88. NAD(+) contacts are provided by residues asparagine 95 and 118–120 (VSN). Substrate contacts are provided by asparagine 120 and arginine 151. The active-site Proton acceptor is histidine 175.

Belongs to the LDH/MDH superfamily. MDH type 3 family.

The enzyme catalyses (S)-malate + NAD(+) = oxaloacetate + NADH + H(+). Its function is as follows. Catalyzes the reversible oxidation of malate to oxaloacetate. The protein is Malate dehydrogenase of Cytophaga hutchinsonii (strain ATCC 33406 / DSM 1761 / CIP 103989 / NBRC 15051 / NCIMB 9469 / D465).